Consider the following 93-residue polypeptide: Integration host factor subunit beta (93 aa).

It belongs to the bacterial histone-like protein family. As to quaternary structure, heterodimer of an alpha and a beta chain.

In terms of biological role, this protein is one of the two subunits of integration host factor, a specific DNA-binding protein that functions in genetic recombination as well as in transcriptional and translational control. This chain is Integration host factor subunit beta, found in Rhodospirillum centenum (strain ATCC 51521 / SW).